Reading from the N-terminus, the 229-residue chain is Endo-1,4-beta-xylanase 1 (229 aa).

A signal peptide spans 1-19; sequence MVAFSSLICALTSIASTLA. Residues 20–51 constitute a propeptide that is removed on maturation; the sequence is MPTGLEPESSVNVTERGMYDFVLGAHNDHRRR. An N-linked (GlcNAc...) asparagine glycan is attached at asparagine 31. The 187-residue stretch at 42 to 228 folds into the GH11 domain; the sequence is LGAHNDHRRR…GSGSASQSVS (187 aa). Tyrosine 117 is a binding site for substrate. The Nucleophile role is filled by glutamate 126. Tyrosine 128, arginine 160, proline 164, glutamine 174, and tyrosine 209 together coordinate substrate. Glutamate 215 functions as the Proton donor in the catalytic mechanism.

The protein belongs to the glycosyl hydrolase 11 (cellulase G) family.

The protein resides in the secreted. The catalysed reaction is Endohydrolysis of (1-&gt;4)-beta-D-xylosidic linkages in xylans.. It functions in the pathway glycan degradation; xylan degradation. Functionally, glycoside hydrolase involved in the hydrolysis of xylan, a major plant cell wall hemicellulose made up of 1,4-beta-linked D-xylopyranose residues. Catalyzes the endohydrolysis of the main-chain 1,4-beta-glycosidic bonds connecting the xylose subunits yielding various xylooligosaccharides and xylose. The sequence is that of Endo-1,4-beta-xylanase 1 from Hypocrea jecorina (strain QM6a) (Trichoderma reesei).